Consider the following 489-residue polypeptide: tRNA(Ile)-lysidine synthase (489 aa).

35–40 (SGGLDS) contributes to the ATP binding site.

This sequence belongs to the tRNA(Ile)-lysidine synthase family.

It localises to the cytoplasm. The catalysed reaction is cytidine(34) in tRNA(Ile2) + L-lysine + ATP = lysidine(34) in tRNA(Ile2) + AMP + diphosphate + H(+). In terms of biological role, ligates lysine onto the cytidine present at position 34 of the AUA codon-specific tRNA(Ile) that contains the anticodon CAU, in an ATP-dependent manner. Cytidine is converted to lysidine, thus changing the amino acid specificity of the tRNA from methionine to isoleucine. The protein is tRNA(Ile)-lysidine synthase of Burkholderia mallei (strain ATCC 23344).